Consider the following 911-residue polypeptide: Brevican core protein (911 aa).

The first 22 residues, 1–22 (MAQLFLPLLAALVLAQAPAALA), serve as a signal peptide directing secretion. Positions 36 to 155 (RVRIAGDAPL…SSDAVEVKVK (120 aa)) constitute an Ig-like V-type domain. 5 cysteine pairs are disulfide-bonded: cysteine 57–cysteine 137, cysteine 179–cysteine 250, cysteine 203–cysteine 224, cysteine 277–cysteine 352, and cysteine 301–cysteine 322. An N-linked (GlcNAc...) asparagine glycan is attached at asparagine 130. Link domains lie at 157-252 (VVFL…YCYA) and 257-354 (GELF…YCFR). Asparagine 337 carries N-linked (GlcNAc...) asparagine glycosylation. The interval 391 to 641 (QLPQEATESE…PTDSASRGGV (251 aa)) is disordered. At serine 418 the chain carries Phosphoserine. Residue serine 418 is glycosylated (O-linked (Xyl...) (chondroitin sulfate) serine). Residues 454–478 (EEEEKYEDEEEKEEEEEEEEVEDEA) show a composition bias toward acidic residues. O-glycosylated at two sites regions lie at residues 520 to 530 (SPLPDGESEAS) and 540 to 545 (TETLPT). An O-glycosylated at one site region spans residues 569–575 (TGGPELS). Positions 612 to 627 (EDNSGRTAPAGTSVQA) are enriched in polar residues. Alanine 646 carries GPI-anchor amidated alanine lipidation. The EGF-like domain occupies 646–682 (ASGDCVPSPCHNGGTCLEEEEGVRCLCLPGYGGDLCD). Cystine bridges form between cysteine 650–cysteine 661, cysteine 655–cysteine 670, cysteine 672–cysteine 681, cysteine 688–cysteine 699, cysteine 716–cysteine 808, cysteine 784–cysteine 800, cysteine 815–cysteine 858, and cysteine 844–cysteine 871. The C-type lectin domain occupies 695 to 809 (FQGACYKHFS…CNYHLSYTCK (115 aa)). The region spanning 813–873 (VSCGPPPELP…WEAPQISCVP (61 aa)) is the Sushi domain. O-linked (GalNAc...) serine glycans are attached at residues serine 905 and serine 906.

The protein belongs to the aggrecan/versican proteoglycan family. As to quaternary structure, interacts with TNR. O-glycosylated; contains chondroitin sulfate. O-glycosylated with a core 1 or possibly core 8 glycan. As to expression, expressed in the retina, specifically in the inner nuclear layer, inner plexiform layer and ganglion cell layer (at protein level). Detected in cerebrospinal fluid (at protein level). Detected in urine (at protein level).

The protein resides in the secreted. It localises to the extracellular space. It is found in the extracellular matrix. Its subcellular location is the membrane. May play a role in the terminally differentiating and the adult nervous system during postnatal development. Could stabilize interactions between hyaluronan (HA) and brain proteoglycans. In Homo sapiens (Human), this protein is Brevican core protein (BCAN).